Reading from the N-terminus, the 136-residue chain is Aspartate 1-decarboxylase (136 aa).

Catalysis depends on S25, which acts as the Schiff-base intermediate with substrate; via pyruvic acid. S25 is modified (pyruvic acid (Ser)). A substrate-binding site is contributed by T57. Residue Y58 is the Proton donor of the active site. 73–75 is a binding site for substrate; sequence GAA. The tract at residues 117-136 is disordered; sequence IFQLGEETTPEEAPSLEQRN.

This sequence belongs to the PanD family. As to quaternary structure, heterooctamer of four alpha and four beta subunits. Pyruvate is required as a cofactor. Is synthesized initially as an inactive proenzyme, which is activated by self-cleavage at a specific serine bond to produce a beta-subunit with a hydroxyl group at its C-terminus and an alpha-subunit with a pyruvoyl group at its N-terminus.

It localises to the cytoplasm. The catalysed reaction is L-aspartate + H(+) = beta-alanine + CO2. It functions in the pathway cofactor biosynthesis; (R)-pantothenate biosynthesis; beta-alanine from L-aspartate: step 1/1. Functionally, catalyzes the pyruvoyl-dependent decarboxylation of aspartate to produce beta-alanine. The protein is Aspartate 1-decarboxylase of Chloroherpeton thalassium (strain ATCC 35110 / GB-78).